We begin with the raw amino-acid sequence, 1033 residues long: Probable beta-glucosidase E (1033 aa).

Residues 1 to 71 (MAPPDSTHGG…RSGSYKLRPV (71 aa)) form a disordered region. Topologically, residues 1–161 (MAPPDSTHGG…PVKYARIWWR (161 aa)) are cytoplasmic. 2 stretches are compositionally biased toward basic and acidic residues: residues 11–20 (SFRDHLKTND) and 59–71 (DLER…LRPV). A helical; Signal-anchor for type II membrane protein membrane pass occupies residues 162 to 182 (TLLAVVVTLVVVVWGFLSFAV). The Extracellular segment spans residues 183-1033 (SHREEPTVWP…SRDLPLMGEY (851 aa)). N-linked (GlcNAc...) asparagine glycosylation is found at asparagine 224, asparagine 232, and asparagine 418. Residue aspartate 446 is part of the active site. N-linked (GlcNAc...) asparagine glycosylation is found at asparagine 489, asparagine 528, asparagine 593, asparagine 909, asparagine 918, and asparagine 976.

Belongs to the glycosyl hydrolase 3 family.

The protein localises to the cell membrane. It carries out the reaction Hydrolysis of terminal, non-reducing beta-D-glucosyl residues with release of beta-D-glucose.. It functions in the pathway glycan metabolism; cellulose degradation. Functionally, beta-glucosidases are one of a number of cellulolytic enzymes involved in the degradation of cellulosic biomass. Catalyzes the last step releasing glucose from the inhibitory cellobiose. The chain is Probable beta-glucosidase E (bglE) from Aspergillus fumigatus (strain CBS 144.89 / FGSC A1163 / CEA10) (Neosartorya fumigata).